Here is an 867-residue protein sequence, read N- to C-terminus: E3 ubiquitin-protein ligase SH3RF1 (867 aa).

The RING-type zinc-finger motif lies at 12 to 53 (CPVCLERLDATAKVLPCQHTFCRRCLLGIVGSRGELRCPECR). The segment at 101–127 (AQGAGGSQRDPGPTGGQSQRVQAKSTP) is disordered. Residues 116-125 (GQSQRVQAKS) show a composition bias toward polar residues. 2 SH3 domains span residues 132–191 (PQLP…VIKP) and 194–257 (QPPP…FNSA). Residues 265-328 (DKPSEGGGDS…PPPQRHSMEI (64 aa)) form a disordered region. Residues 275 to 285 (SEGPSSSSSGP) are compositionally biased toward low complexity. Residues 436–497 (QRPTVYVAMF…PGNYMSPVSR (62 aa)) form the SH3 3 domain. Positions 706–794 (LSNKKKLRPS…APIAPPPRQP (89 aa)) are disordered. The segment covering 760 to 769 (SELSMSSSSS) has biased composition (low complexity). Residues 770-784 (NTDAVTHRSSPQDNT) show a composition bias toward polar residues. Positions 808-867 (IVCERYRVVVSYPPQSEAELELKEGDIVFVHKKREDGWFKGTLQRNGRTGLFPGSFVDSI) constitute an SH3 4 domain.

Belongs to the SH3RF family. In terms of processing, autoubiquitinated. Ubiquitinated by SH3RF2, leading to proteasome-mediated degradation.

It is found in the cytoplasm. The protein resides in the perinuclear region. It localises to the cell projection. Its subcellular location is the lamellipodium. The protein localises to the golgi apparatus. It is found in the trans-Golgi network. The catalysed reaction is S-ubiquitinyl-[E2 ubiquitin-conjugating enzyme]-L-cysteine + [acceptor protein]-L-lysine = [E2 ubiquitin-conjugating enzyme]-L-cysteine + N(6)-ubiquitinyl-[acceptor protein]-L-lysine.. It participates in protein modification; protein ubiquitination. Its function is as follows. Has E3 ubiquitin-protein ligase activity. In the absence of an external substrate, it can catalyze self-ubiquitination. Acts as a scaffold protein that contributes to the effective activation of the JNK signaling pathway. This is E3 ubiquitin-protein ligase SH3RF1 (sh3rf1) from Danio rerio (Zebrafish).